A 227-amino-acid polypeptide reads, in one-letter code: PKHD-type hydroxylase Mfla_2317 (227 aa).

The Fe2OG dioxygenase domain occupies 78–178 (KVFPPLFNRY…RVSSFFWMQS (101 aa)). Positions 96, 98, and 159 each coordinate Fe cation. Arg169 contributes to the 2-oxoglutarate binding site.

Fe(2+) is required as a cofactor. It depends on L-ascorbate as a cofactor.

The protein is PKHD-type hydroxylase Mfla_2317 of Methylobacillus flagellatus (strain ATCC 51484 / DSM 6875 / VKM B-1610 / KT).